The sequence spans 483 residues: SWI/SNF-related matrix-associated actin-dependent regulator of chromatin subfamily D member 3 (483 aa).

Residue A2 is modified to N-acetylalanine. The disordered stretch occupies residues V26–K102. Positions Q78–P87 are enriched in low complexity. At S178 the chain carries Phosphoserine. In terms of domain architecture, SWIB/MDM2 spans Y258–P335.

Belongs to the SMARCD family. In terms of assembly, component of the multiprotein chromatin-remodeling complexes SWI/SNF: SWI/SNF-A (BAF), SWI/SNF-B (PBAF) and related complexes. The canonical complex contains a catalytic subunit (either SMARCA4/BRG1/BAF190A or SMARCA2/BRM/BAF190B) and at least SMARCE1, ACTL6A/BAF53, SMARCC1/BAF155, SMARCC2/BAF170, and SMARCB1/SNF5/BAF47. Other subunits specific to each of the complexes may also be present permitting several possible combinations developmentally and tissue specific. Component of the BAF complex, which includes at least actin (ACTB), ARID1A/BAF250A, ARID1B/BAF250B, SMARCA2/BRM, SMARCA4/BRG1/BAF190A, ACTL6A/BAF53, ACTL6B/BAF53B, SMARCE1/BAF57, SMARCC1/BAF155, SMARCC2/BAF170, SMARCB1/SNF5/INI1, and one or more SMARCD1/BAF60A, SMARCD2/BAF60B, or SMARCD3/BAF60C. In muscle cells, the BAF complex also contains DPF3. Component of neural progenitors-specific chromatin remodeling complex (npBAF complex) composed of at least, ARID1A/BAF250A or ARID1B/BAF250B, SMARCD1/BAF60A, SMARCD3/BAF60C, SMARCA2/BRM/BAF190B, SMARCA4/BRG1/BAF190A, SMARCB1/BAF47, SMARCC1/BAF155, SMARCE1/BAF57, SMARCC2/BAF170, PHF10/BAF45A, ACTL6A/BAF53A and actin. Component of neuron-specific chromatin remodeling complex (nBAF complex) composed of at least, ARID1A/BAF250A or ARID1B/BAF250B, SMARCD1/BAF60A, SMARCD3/BAF60C, SMARCA2/BRM/BAF190B, SMARCA4/BRG1/BAF190A, SMARCB1/BAF47, SMARCC1/BAF155, SMARCE1/BAF57, SMARCC2/BAF170, DPF1/BAF45B, DPF3/BAF45C, ACTL6B/BAF53B and actin. May be a component of the SWI/SNF-B (PBAF) chromatin remodeling complex, at least composed of SMARCA4/BRG1, SMARCB1/BAF47/SNF5, ACTL6A/BAF53A or ACTL6B/BAF53B, SMARCE1/BAF57, SMARCD1/BAF60A, SMARCD2/BAF60B, perhaps SMARCD3/BAF60C, SMARCC1/BAF155, SMARCC2/BAF170, PBRM1/BAF180, ARID2/BAF200 and actin. Interacts with SMARCA4/BRG1/BAF190A. Component of SWI/SNF (GBAF) subcomplex, which includes at least BICRA or BICRAL (mutually exclusive), BRD9, SS18, SMARCA2/BRM, SMARCA4/BRG1/BAF190A, ACTL6A/BAF53, SMARCC1/BAF155, and SMARCD1/BAF60A. The precise distribution of the related SMARCD1, SMARCD2 and SMARCD3 proteins among these and other SWI/SNF nucleosome-remodeling complexes is not fully known. May allow recruitment of SWI/SNF containing complexes specifically to promoters where these factors are located. Also interacts with several nuclear receptors including PPARG/NR1C3, RXRA/NR1F1, ESR1, NR5A1, NR5A2/LRH1 and other transcriptional activators including the HLH protein SREBF1/SREBP1 and the homeobox protein PBX1. Interacts with PRDM1/BLIMP1. In terms of tissue distribution, isoform 2 and isoform 1 are expressed in brain, heart, kidney, placenta, prostate, salivary gland, spleen, testis, thyroid, trachea and uterus. Isoform 1 is also expressed in skeletal muscle and adipose tissue.

The protein localises to the nucleus. In terms of biological role, involved in transcriptional activation and repression of select genes by chromatin remodeling (alteration of DNA-nucleosome topology). Component of SWI/SNF chromatin remodeling complexes that carry out key enzymatic activities, changing chromatin structure by altering DNA-histone contacts within a nucleosome in an ATP-dependent manner. Stimulates nuclear receptor mediated transcription. Belongs to the neural progenitors-specific chromatin remodeling complex (npBAF complex) and the neuron-specific chromatin remodeling complex (nBAF complex). During neural development a switch from a stem/progenitor to a postmitotic chromatin remodeling mechanism occurs as neurons exit the cell cycle and become committed to their adult state. The transition from proliferating neural stem/progenitor cells to postmitotic neurons requires a switch in subunit composition of the npBAF and nBAF complexes. As neural progenitors exit mitosis and differentiate into neurons, npBAF complexes which contain ACTL6A/BAF53A and PHF10/BAF45A, are exchanged for homologous alternative ACTL6B/BAF53B and DPF1/BAF45B or DPF3/BAF45C subunits in neuron-specific complexes (nBAF). The npBAF complex is essential for the self-renewal/proliferative capacity of the multipotent neural stem cells. The nBAF complex along with CREST plays a role regulating the activity of genes essential for dendrite growth. This is SWI/SNF-related matrix-associated actin-dependent regulator of chromatin subfamily D member 3 (SMARCD3) from Homo sapiens (Human).